Reading from the N-terminus, the 196-residue chain is Rho-related protein racL (196 aa).

Position 10-17 (10-17 (GDGAVGKT)) interacts with GTP. An Effector region motif is present at residues 32–40 (YQPTVFDNF). Residues 57-61 (DTAGQ) and 116-119 (TQND) each bind GTP. Residue Cys-193 is modified to Cysteine methyl ester. Residue Cys-193 is the site of S-geranylgeranyl cysteine attachment. Residues 194 to 196 (IIL) constitute a propeptide, removed in mature form.

Belongs to the small GTPase superfamily. Rho family.

The protein localises to the cell membrane. The sequence is that of Rho-related protein racL (racL) from Dictyostelium discoideum (Social amoeba).